The sequence spans 192 residues: ADP-ribosylation factor-like protein 14 (192 aa).

Residue G2 is the site of N-myristoyl glycine attachment. GTP contacts are provided by residues 20-27 (GLDSAGKS), 64-68 (DVGGQ), and 123-126 (NKQD).

It belongs to the small GTPase superfamily. Arf family. As to quaternary structure, interacts with ARL14EP. In terms of tissue distribution, expressed in immature dendritic cells.

It localises to the cytoplasmic vesicle. Its function is as follows. GTPase that recruits MYO1E to MHC class II-containing vesicles via the effector protein ARL14EP and hence controls the movement of these vesicles along the actin cytoskeleton in dendritic cells. The chain is ADP-ribosylation factor-like protein 14 (ARL14) from Homo sapiens (Human).